Here is a 277-residue protein sequence, read N- to C-terminus: Large ribosomal subunit protein uL2 (277 aa).

The tract at residues 223–261 (SVMNPNDHPHGGGEGKSPVGRPSPVTPWGKPALGYKTRK) is disordered.

It belongs to the universal ribosomal protein uL2 family. Part of the 50S ribosomal subunit. Forms a bridge to the 30S subunit in the 70S ribosome.

In terms of biological role, one of the primary rRNA binding proteins. Required for association of the 30S and 50S subunits to form the 70S ribosome, for tRNA binding and peptide bond formation. It has been suggested to have peptidyltransferase activity; this is somewhat controversial. Makes several contacts with the 16S rRNA in the 70S ribosome. The protein is Large ribosomal subunit protein uL2 of Clostridium botulinum (strain Alaska E43 / Type E3).